The primary structure comprises 1166 residues: Reverse gyrase 2 (1166 aa).

Residues 1 to 40 (MINVMYKNSCPNCGGDISGDRLLNGLPCEACLPYINGIDD) form an RG N-terminal-type zinc finger. Zn(2+) contacts are provided by Cys10, Cys13, Cys28, and Cys31. ATP is bound by residues Gln92 and 109-116 (APTGLGKT). The region spanning 96–285 (LRRLASNQSF…ALRLLTGFEP (190 aa)) is the Helicase ATP-binding domain. A DEAD box motif is present at residues 190-193 (DDAD). Positions 576-1166 (FNISTGLLIV…VNPLKSEQNV (591 aa)) are topoisomerase I. A Toprim domain is found at 580–743 (TGLLIVESPT…NVYRVVYHEI (164 aa)). Glu586 provides a ligand contact to Mg(2+). An RG C-terminal-type zinc finger spans residues 662–689 (IKKCLDCNKIFSSASDKCPYCGSANLQS). Zn(2+) contacts are provided by Cys665, Cys668, Cys679, and Cys682. A Mg(2+)-binding site is contributed by Asp712. The Topo IA-type catalytic domain occupies 759-1157 (NTNLVMSQIV…EIFSEISTLV (399 aa)). Catalysis depends on Tyr903, which acts as the O-(5'-phospho-DNA)-tyrosine intermediate.

In the N-terminal section; belongs to the DEAD box helicase family. DDVD subfamily. The protein in the C-terminal section; belongs to the type IA topoisomerase family. Monomer. Zn(2+) is required as a cofactor. Requires Mg(2+) as cofactor.

It localises to the cytoplasm. It catalyses the reaction ATP + H2O = ADP + phosphate + H(+). At least one of the 2 proteins is inhibited by actinomycin D. Less sensitive to NaCl than TopR1, maximal positive supercoiling is observed with 100 mM NaCl; as NaCl rises higher than 400 mM supercoiling decreases. At 600 mM NaCl relaxes but does not introduce positive supercoils into negatively supercoiled substrate. Modifies the topological state of DNA by introducing positive supercoils in an ATP-dependent process. A highly processive enzyme, it introduces a large number of positive supercoils directly in a negatively supercoiled substrate. At 75 degrees Celsius introduces more than 23 positive supercoils into pTZ18R DNA (probably 2860 bp), more than TopR1; unlike TopR1 little to no relaxation of the negatively supercoiled substrate is seen in the presence of ATP, in the absence of ATP no activity is seen. At 45 degrees Celsius the enzyme is slower and in vitro individual steps can be detected. It cleaves transiently a single DNA strand and remains covalently bound to the 5' DNA end through a tyrosine residue. May be involved in DNA damage response. May be involved in rewinding the DNA strands in the regions of the chromosome that have opened up to allow transcription or replication. Its function is as follows. There are 2 genes for this protein in the cell. During exponential growth this is the more highly expressed isoform (about 125 molecules per cell at 80 degrees Celsius, about 117 molecules at 88 degrees Celsius); this isoform is less active at higher temperature. Grows actively at both 80 and 88 degrees Celsius; survives a long exposure at 45 degrees Celsius without DNA replication or cell division occurring. Experiments using whole cell extracts do not distinguish which isoform is present, the results are probably a mixture of the two forms. In Saccharolobus solfataricus (strain ATCC 35092 / DSM 1617 / JCM 11322 / P2) (Sulfolobus solfataricus), this protein is Reverse gyrase 2.